The following is a 159-amino-acid chain: Transcription elongation factor GreA (159 aa).

Belongs to the GreA/GreB family.

In terms of biological role, necessary for efficient RNA polymerase transcription elongation past template-encoded arresting sites. The arresting sites in DNA have the property of trapping a certain fraction of elongating RNA polymerases that pass through, resulting in locked ternary complexes. Cleavage of the nascent transcript by cleavage factors such as GreA or GreB allows the resumption of elongation from the new 3'terminus. GreA releases sequences of 2 to 3 nucleotides. This Orientia tsutsugamushi (strain Boryong) (Rickettsia tsutsugamushi) protein is Transcription elongation factor GreA.